The primary structure comprises 609 residues: WD repeat-containing protein 1 (609 aa).

WD repeat units lie at residues 6–47 (EIKK…IRNI), 50–89 (PAIADIYTEHAHQVVVAKYAPSGFYIASGDVSGKLRIWDT), 95–137 (LLKY…LWDS), 140–178 (SVGEITGHNKVINSVDIKQTRPYRLATGSDDNCAAFFEG), 182–220 (KFKFTLSDHTRFVNCVRFSPDGNRFATASADGQIFIYDG), 226–265 (VCALGGGKAHDGGIYAISWSPDSSQLLSASGDKTAKIWDV), 272–308 (STFNMGSNVLDQQLGCLWQKDHLLSLSLSGYINYLDK), 313–353 (KPLR…YWDS), 360–410 (GFSG…KMDV), 434–476 (MKDK…LYSI), 482–520 (KSDDKTLEAKGPVTDLAYSHDGAFLAVCDANKVVTVFSV), 525–563 (VEHNVFYGHHAKVVCIAWSPDNEHFASGGMDMMVYVWTV), and 568–606 (TRIKIPDAHRLHHVSGLAWLDEHTLVTTSHDASVKEWSI).

Belongs to the WD repeat AIP1 family.

Its subcellular location is the cytoplasm. The protein resides in the cytoskeleton. In terms of biological role, induces disassembly of actin filaments in conjunction with ADF/cofilin family proteins. Enhances cofilin-mediated actin severing. This is WD repeat-containing protein 1 (WDR1) from Gallus gallus (Chicken).